The sequence spans 212 residues: MSTENTSTAVAEEIPNLLITPSAQEYLGDLLEKQNTPGIGVRIFVENPGTPRAECCMAYSAPDEVNPADYKQEYSDFPAYIDAPSIPYLLDAVIDYNKDRFGGQLTFRAPNSKVPRVGPDASIEERITYILQSEINPGLAGHGGNCALVEVQDDPENGLTAVLKFGGGCQGCSAIDVTLKQGVETTLRQQIPELQRVVDQTDHTQAEGAYFK.

[4Fe-4S] cluster is bound by residues C169 and C172.

Belongs to the NfuA family. In terms of assembly, homodimer. [4Fe-4S] cluster is required as a cofactor.

Involved in iron-sulfur cluster biogenesis. Binds a 4Fe-4S cluster, can transfer this cluster to apoproteins, and thereby intervenes in the maturation of Fe/S proteins. Could also act as a scaffold/chaperone for damaged Fe/S proteins. The chain is Fe/S biogenesis protein NfuA from Acinetobacter baylyi (strain ATCC 33305 / BD413 / ADP1).